The sequence spans 533 residues: Phosphoenolpyruvate carboxykinase (ATP) (533 aa).

Substrate is bound by residues Arg-59, Tyr-199, and Lys-205. ATP-binding positions include Lys-205, His-224, and 240-248; that span reads GLSGTGKTT. Positions 205 and 224 each coordinate Mn(2+). Mn(2+) is bound at residue Asp-261. Residues Glu-289, Arg-325, 441-442, and Thr-447 each bind ATP; that span reads RI. Arg-325 provides a ligand contact to substrate.

This sequence belongs to the phosphoenolpyruvate carboxykinase (ATP) family. Monomer. It depends on Mn(2+) as a cofactor.

It localises to the cytoplasm. It catalyses the reaction oxaloacetate + ATP = phosphoenolpyruvate + ADP + CO2. Its pathway is carbohydrate biosynthesis; gluconeogenesis. In terms of biological role, involved in the gluconeogenesis. Catalyzes the conversion of oxaloacetate (OAA) to phosphoenolpyruvate (PEP) through direct phosphoryl transfer between the nucleoside triphosphate and OAA. The protein is Phosphoenolpyruvate carboxykinase (ATP) of Idiomarina loihiensis (strain ATCC BAA-735 / DSM 15497 / L2-TR).